We begin with the raw amino-acid sequence, 350 residues long: Holliday junction branch migration complex subunit RuvB (350 aa).

Residues 1–184 form a large ATPase domain (RuvB-L) region; it reads MSKTPERLVT…FGIPIRLEFY (184 aa). ATP is bound by residues L23, R24, G65, K68, T69, T70, 131-133, R174, Y184, and R221; that span reads EDF. T69 is a binding site for Mg(2+). The tract at residues 185-255 is small ATPAse domain (RuvB-S); sequence TIEELERIVL…LADKALSLLD (71 aa). Positions 258 to 350 are head domain (RuvB-H); sequence PIGLDQMDRR…GLFPDQSEED (93 aa). Residues R294, R313, and R318 each coordinate DNA.

It belongs to the RuvB family. In terms of assembly, homohexamer. Forms an RuvA(8)-RuvB(12)-Holliday junction (HJ) complex. HJ DNA is sandwiched between 2 RuvA tetramers; dsDNA enters through RuvA and exits via RuvB. An RuvB hexamer assembles on each DNA strand where it exits the tetramer. Each RuvB hexamer is contacted by two RuvA subunits (via domain III) on 2 adjacent RuvB subunits; this complex drives branch migration. In the full resolvosome a probable DNA-RuvA(4)-RuvB(12)-RuvC(2) complex forms which resolves the HJ.

It localises to the cytoplasm. It catalyses the reaction ATP + H2O = ADP + phosphate + H(+). Its function is as follows. The RuvA-RuvB-RuvC complex processes Holliday junction (HJ) DNA during genetic recombination and DNA repair, while the RuvA-RuvB complex plays an important role in the rescue of blocked DNA replication forks via replication fork reversal (RFR). RuvA specifically binds to HJ cruciform DNA, conferring on it an open structure. The RuvB hexamer acts as an ATP-dependent pump, pulling dsDNA into and through the RuvAB complex. RuvB forms 2 homohexamers on either side of HJ DNA bound by 1 or 2 RuvA tetramers; 4 subunits per hexamer contact DNA at a time. Coordinated motions by a converter formed by DNA-disengaged RuvB subunits stimulates ATP hydrolysis and nucleotide exchange. Immobilization of the converter enables RuvB to convert the ATP-contained energy into a lever motion, pulling 2 nucleotides of DNA out of the RuvA tetramer per ATP hydrolyzed, thus driving DNA branch migration. The RuvB motors rotate together with the DNA substrate, which together with the progressing nucleotide cycle form the mechanistic basis for DNA recombination by continuous HJ branch migration. Branch migration allows RuvC to scan DNA until it finds its consensus sequence, where it cleaves and resolves cruciform DNA. The sequence is that of Holliday junction branch migration complex subunit RuvB from Beijerinckia indica subsp. indica (strain ATCC 9039 / DSM 1715 / NCIMB 8712).